The following is a 388-amino-acid chain: 3-dehydroquinate synthase (388 aa).

NAD(+) contacts are provided by residues 85-90, 119-123, 143-144, Lys156, Lys165, and 183-186; these read DGEQYK, GVIGD, TT, and TLKT. Zn(2+) contacts are provided by Glu198, His261, and His278.

It belongs to the sugar phosphate cyclases superfamily. Dehydroquinate synthase family. The cofactor is Co(2+). Zn(2+) serves as cofactor. It depends on NAD(+) as a cofactor.

It localises to the cytoplasm. It carries out the reaction 7-phospho-2-dehydro-3-deoxy-D-arabino-heptonate = 3-dehydroquinate + phosphate. It functions in the pathway metabolic intermediate biosynthesis; chorismate biosynthesis; chorismate from D-erythrose 4-phosphate and phosphoenolpyruvate: step 2/7. Its function is as follows. Catalyzes the conversion of 3-deoxy-D-arabino-heptulosonate 7-phosphate (DAHP) to dehydroquinate (DHQ). This chain is 3-dehydroquinate synthase, found in Psychrobacter arcticus (strain DSM 17307 / VKM B-2377 / 273-4).